Here is an 810-residue protein sequence, read N- to C-terminus: Phenylalanine--tRNA ligase beta subunit (810 aa).

The tRNA-binding domain occupies 39-150 (RTWANGVVVG…ENLPLGSDVR (112 aa)). The region spanning 411 to 495 (TWSRSIFLRL…RLYGYDNFCD (85 aa)) is the B5 domain. Mg(2+)-binding residues include Asp473, Asp479, Glu482, and Glu483. Residues 716–809 (STYPASDRDI…LVEKFGVNLR (94 aa)) form the FDX-ACB domain.

The protein belongs to the phenylalanyl-tRNA synthetase beta subunit family. Type 1 subfamily. In terms of assembly, tetramer of two alpha and two beta subunits. The cofactor is Mg(2+).

Its subcellular location is the cytoplasm. It carries out the reaction tRNA(Phe) + L-phenylalanine + ATP = L-phenylalanyl-tRNA(Phe) + AMP + diphosphate + H(+). The sequence is that of Phenylalanine--tRNA ligase beta subunit from Trichormus variabilis (strain ATCC 29413 / PCC 7937) (Anabaena variabilis).